An 879-amino-acid polypeptide reads, in one-letter code: MNQPYSAMRNNIHMLGDFLGETIREAQGNEILELIESIRVLSRDSRAGDEKAREQLLDKLANISTENVLPVARAFSQFLNLTNIAEQYQTISRHHQDESLGNRSLSALFARLKAQGTPVETVIKTVEKLSIELVLTAHPTEVTRRSLVHKHVEINKCLGQLEHDDLTEAEQTKLKRRLMQLIALAWHTNEIRAARPTPVDEAKWGMAIIENSLWKAVPDFCRELNFQLEKHFDVQYEVALSPVRFSSWMGGDRDGNPFVTAEITQKVLRMNRWKAAELFLNDVSDLVEELSIVQCTPEFREKYGDHIEPYRVVVKGLRSKLQKTLTYFGELIEAKPTTVDPSEIITCDNDLWEPLYDCYQSLHACGMRIIANGSLLDCLRRIRCFGLGLSRLDIRQESSRHETAIAEITRYIGLGDYAQWTEDDKQAFLVRELSSRRPLVPTNWTPSPETQEILDTCKVVAQQPEGTISAYVISMAREASDVLAVHLLLKEAGCNYTLPVAPLFETLDDLDHSEKVMTDLFNIGWYRGVINNYQMVMIGYSDSAKDAGMLAASWAQYRAQEALVNLAEKYHIELVLFHGRGGTVGRGGAPAHAALLSQPPRSLKSGLRVTEQGEMIRFKLGLPAVAVETLNLYASAILEANLLPPPEPKQKWRDIMDKGAAISCEIYRGVVRGEPDFVPYFRSATPEQELGKLPLGSRPSKRNPNGGVESLRAIPWIFAWMQNRLMLPAWLGAGAALRQMIEQGEESTLKEMCNEWPFFSTRIGMLEMVFSKADLWLAEHYDQRLVAKELHRLGKTLRAQLSADIQTVLTLAHDGQLMADLPWIAESIALRNVYTDPLNLLQVELLQRLRSQGEVRDPQLEQALMITITGIAAGMRNTG.

Catalysis depends on residues His-138 and Lys-545.

Belongs to the PEPCase type 1 family. The cofactor is Mg(2+).

The catalysed reaction is oxaloacetate + phosphate = phosphoenolpyruvate + hydrogencarbonate. Forms oxaloacetate, a four-carbon dicarboxylic acid source for the tricarboxylic acid cycle. This Actinobacillus pleuropneumoniae serotype 5b (strain L20) protein is Phosphoenolpyruvate carboxylase.